A 237-amino-acid polypeptide reads, in one-letter code: Sugar fermentation stimulation protein homolog (237 aa).

Belongs to the SfsA family.

The chain is Sugar fermentation stimulation protein homolog from Pseudomonas fluorescens (strain Pf0-1).